The sequence spans 199 residues: 7-methyl-GTP pyrophosphatase (199 aa).

Asp76 acts as the Proton acceptor in catalysis.

This sequence belongs to the Maf family. YceF subfamily. A divalent metal cation is required as a cofactor.

It is found in the cytoplasm. The catalysed reaction is N(7)-methyl-GTP + H2O = N(7)-methyl-GMP + diphosphate + H(+). Its function is as follows. Nucleoside triphosphate pyrophosphatase that hydrolyzes 7-methyl-GTP (m(7)GTP). May have a dual role in cell division arrest and in preventing the incorporation of modified nucleotides into cellular nucleic acids. This chain is 7-methyl-GTP pyrophosphatase, found in Rhizobium etli (strain ATCC 51251 / DSM 11541 / JCM 21823 / NBRC 15573 / CFN 42).